Consider the following 405-residue polypeptide: Tryptophan synthase beta chain (405 aa).

K95 carries the N6-(pyridoxal phosphate)lysine modification.

Belongs to the TrpB family. Tetramer of two alpha and two beta chains. Pyridoxal 5'-phosphate serves as cofactor.

The enzyme catalyses (1S,2R)-1-C-(indol-3-yl)glycerol 3-phosphate + L-serine = D-glyceraldehyde 3-phosphate + L-tryptophan + H2O. It functions in the pathway amino-acid biosynthesis; L-tryptophan biosynthesis; L-tryptophan from chorismate: step 5/5. Its function is as follows. The beta subunit is responsible for the synthesis of L-tryptophan from indole and L-serine. This is Tryptophan synthase beta chain from Pseudomonas putida (strain GB-1).